A 554-amino-acid polypeptide reads, in one-letter code: Propanediol dehydratase large subunit (554 aa).

Belongs to the diol/glycerol dehydratase large subunit family. The propanediol dehydratase enzyme is a heterotrimeric complex composed of a large (PduC), a medium (PduD) and a small (PduE) subunit. Adenosylcob(III)alamin is required as a cofactor.

Its subcellular location is the bacterial microcompartment. It catalyses the reaction propane-1,2-diol = propanal + H2O. Its pathway is polyol metabolism; 1,2-propanediol degradation. Inhibited by glycerol. Its function is as follows. Part of the PduCDE complex that catalyzes the dehydration of 1,2-propanediol (1,2-PD) to propionaldehyde. Required for S.typhimurium growth on 1,2-PD as the sole carbon and energy source. This subunit is directly targeted to the BMC. The 1,2-PD-specific bacterial microcompartment (BMC) concentrates low levels of 1,2-PD catabolic enzymes, concentrates volatile reaction intermediates thus enhancing pathway flux and keeps the level of toxic, mutagenic propionaldehyde low. In Salmonella typhimurium (strain LT2 / SGSC1412 / ATCC 700720), this protein is Propanediol dehydratase large subunit.